Consider the following 358-residue polypeptide: Oligopeptide transport ATP-binding protein OppD (358 aa).

In terms of domain architecture, ABC transporter spans leucine 8–leucine 259. Glycine 44–serine 51 contributes to the ATP binding site.

Belongs to the ABC transporter superfamily. In terms of assembly, the complex is composed of two ATP-binding proteins (OppD and OppF), two transmembrane proteins (OppB and OppC) and a solute-binding protein (OppA).

It is found in the cell membrane. It catalyses the reaction a [peptide](out) + ATP + H2O = a [peptide](in) + ADP + phosphate + H(+). Part of the ABC transporter complex OppABCDF involved in the uptake of oligopeptides. Probably responsible for energy coupling to the transport system. Required for sporulation and genetic competence. This is Oligopeptide transport ATP-binding protein OppD from Bacillus subtilis (strain 168).